The sequence spans 105 residues: Large ribosomal subunit protein uL24 (105 aa).

The protein belongs to the universal ribosomal protein uL24 family. As to quaternary structure, part of the 50S ribosomal subunit.

Its function is as follows. One of two assembly initiator proteins, it binds directly to the 5'-end of the 23S rRNA, where it nucleates assembly of the 50S subunit. In terms of biological role, one of the proteins that surrounds the polypeptide exit tunnel on the outside of the subunit. The protein is Large ribosomal subunit protein uL24 of Xanthobacter autotrophicus (strain ATCC BAA-1158 / Py2).